Here is a 233-residue protein sequence, read N- to C-terminus: MSACQTPLIVALDFPTREAALKLADQLDPALCRVKVGKELFTSSASGIVETLCDKGFEVFLDLKFHDIPNTTAMAVKAAAEMGVWMVNVHCSGGLRMMVACREELAKRSGPQPLLIGVTVLTSMEREDLAGIGLDVDPQEQVLRLAALAEKAGMDGLVCSALEAPALKAAHPSLQLVTPGIRPAGSAQDDQRRILTPRQALDAGSDYLVIGRPISQAADPAQALAAVVAEIRG.

Substrate is bound by residues Asp13, Lys35, 62-71, Thr122, Arg182, Gln191, Gly211, and Arg212; that span reads DLKFHDIPNT. Lys64 (proton donor) is an active-site residue.

Belongs to the OMP decarboxylase family. Type 1 subfamily. Homodimer.

The enzyme catalyses orotidine 5'-phosphate + H(+) = UMP + CO2. It functions in the pathway pyrimidine metabolism; UMP biosynthesis via de novo pathway; UMP from orotate: step 2/2. Catalyzes the decarboxylation of orotidine 5'-monophosphate (OMP) to uridine 5'-monophosphate (UMP). This Pseudomonas putida (strain ATCC 700007 / DSM 6899 / JCM 31910 / BCRC 17059 / LMG 24140 / F1) protein is Orotidine 5'-phosphate decarboxylase.